Consider the following 137-residue polypeptide: Ribosome-binding factor A (137 aa).

Belongs to the RbfA family. In terms of assembly, monomer. Binds 30S ribosomal subunits, but not 50S ribosomal subunits or 70S ribosomes.

The protein resides in the cytoplasm. In terms of biological role, one of several proteins that assist in the late maturation steps of the functional core of the 30S ribosomal subunit. Associates with free 30S ribosomal subunits (but not with 30S subunits that are part of 70S ribosomes or polysomes). Required for efficient processing of 16S rRNA. May interact with the 5'-terminal helix region of 16S rRNA. The sequence is that of Ribosome-binding factor A from Erwinia tasmaniensis (strain DSM 17950 / CFBP 7177 / CIP 109463 / NCPPB 4357 / Et1/99).